The primary structure comprises 122 residues: Large ribosomal subunit protein uL14 (122 aa).

The protein belongs to the universal ribosomal protein uL14 family. As to quaternary structure, part of the 50S ribosomal subunit. Forms a cluster with proteins L3 and L19. In the 70S ribosome, L14 and L19 interact and together make contacts with the 16S rRNA in bridges B5 and B8.

Binds to 23S rRNA. Forms part of two intersubunit bridges in the 70S ribosome. This Endomicrobium trichonymphae protein is Large ribosomal subunit protein uL14.